The sequence spans 348 residues: Phosphate acyltransferase (348 aa).

Belongs to the PlsX family. Homodimer. Probably interacts with PlsY.

The protein resides in the cytoplasm. It carries out the reaction a fatty acyl-[ACP] + phosphate = an acyl phosphate + holo-[ACP]. It functions in the pathway lipid metabolism; phospholipid metabolism. Its function is as follows. Catalyzes the reversible formation of acyl-phosphate (acyl-PO(4)) from acyl-[acyl-carrier-protein] (acyl-ACP). This enzyme utilizes acyl-ACP as fatty acyl donor, but not acyl-CoA. The polypeptide is Phosphate acyltransferase (Pectobacterium carotovorum subsp. carotovorum (strain PC1)).